The following is a 352-amino-acid chain: Phenylalanine--tRNA ligase alpha subunit (352 aa).

Mg(2+) is bound at residue glutamate 258.

This sequence belongs to the class-II aminoacyl-tRNA synthetase family. Phe-tRNA synthetase alpha subunit type 1 subfamily. Tetramer of two alpha and two beta subunits. The cofactor is Mg(2+).

It localises to the cytoplasm. The catalysed reaction is tRNA(Phe) + L-phenylalanine + ATP = L-phenylalanyl-tRNA(Phe) + AMP + diphosphate + H(+). In Staphylococcus aureus (strain Mu3 / ATCC 700698), this protein is Phenylalanine--tRNA ligase alpha subunit.